A 152-amino-acid polypeptide reads, in one-letter code: Transposase for insertion sequence element IS200 (152 aa).

Mg(2+) is bound by residues H61 and H63. Catalysis depends on Y125, which acts as the Nucleophile. Q129 contacts Mg(2+).

It belongs to the transposase 17 family. In terms of assembly, homodimer. Mg(2+) is required as a cofactor.

In terms of biological role, transposase responsible for transposition of the IS200 insertion sequence (IS) element. Transposition occurs in 2 main steps, excision from the donor DNA 'top strand' into a single strand circle and its subsequent reinsertion into the DNA target. This increases the copy number of the IS. The polypeptide is Transposase for insertion sequence element IS200 (tnpA1) (Salmonella typhi).